Consider the following 222-residue polypeptide: Protein-L-isoaspartate O-methyltransferase (222 aa).

The active site involves serine 68.

It belongs to the methyltransferase superfamily. L-isoaspartyl/D-aspartyl protein methyltransferase family.

The protein localises to the cytoplasm. The catalysed reaction is [protein]-L-isoaspartate + S-adenosyl-L-methionine = [protein]-L-isoaspartate alpha-methyl ester + S-adenosyl-L-homocysteine. Functionally, catalyzes the methyl esterification of L-isoaspartyl residues in peptides and proteins that result from spontaneous decomposition of normal L-aspartyl and L-asparaginyl residues. It plays a role in the repair and/or degradation of damaged proteins. This chain is Protein-L-isoaspartate O-methyltransferase, found in Koribacter versatilis (strain Ellin345).